The sequence spans 946 residues: Inhibin beta chain (946 aa).

Disordered stretches follow at residues V115–S142 and K174–R194. The span at V128–S142 shows a compositional bias: low complexity. N-linked (GlcNAc...) asparagine glycans are attached at residues N208, N217, N271, and N389. Residues S436–Y462 form a disordered region. Basic and acidic residues predominate over residues G447 to H459. Residues N471, N484, N542, N561, N566, N732, and N804 are each glycosylated (N-linked (GlcNAc...) asparagine). Cystine bridges form between C837-C846, C845-C912, C874-C943, and C878-C945.

The protein belongs to the TGF-beta family. Homodimer or heterodimer; disulfide-linked. Cleaved in vitro by metalloproteases tok and tld to produce a 30 kDa product. In terms of tissue distribution, widely expressed in larval brains.

The protein localises to the secreted. Controls several aspects of neuronal morphogenesis; essential for optic lobe development, EcR-B1 expression in larval brains, mushroom body remodeling, dorsal neuron morphogenesis and motoneuron axon guidance. Ligands Actbeta and daw act redundantly through the Activin receptor Babo and its transcriptional mediator Smad2 (Smox), to regulate neuroblast numbers and proliferation rates in the developing larval brain. This is Inhibin beta chain (Actbeta) from Drosophila melanogaster (Fruit fly).